A 166-amino-acid polypeptide reads, in one-letter code: MASPDVEYRCFVGGLAWATDDRALETAFSQYGEVLDSKIINDRETGRSRGFGFVTFKDEKSMKDAIEGMNGQDLDGRSITVNEAQSRGSGGGGGGRGGGGGYRSGGGGGYGGGGGGYGGGGREGGYSGGGGGYSSRGGGGGGYGGGGRRDGGEGGGYGGSGGGGGW.

Residues 8 to 86 form the RRM domain; it reads YRCFVGGLAW…RSITVNEAQS (79 aa). The tract at residues 68–166 is disordered; the sequence is GMNGQDLDGR…YGGSGGGGGW (99 aa). Composition is skewed to gly residues over residues 88–146 and 153–166; these read GSGG…YGGG and EGGG…GGGW.

In terms of tissue distribution, predominantly expressed in meristematic and growing tissue.

The protein resides in the nucleus. Its function is as follows. May play a general role in circadian phenomena associated with meristematic tissue. The polypeptide is Glycine-rich RNA-binding protein GRP1A (Sinapis alba (White mustard)).